Here is a 209-residue protein sequence, read N- to C-terminus: Protease (209 aa).

Catalysis depends on residues His-55, Asp-72, and Cys-123.

Belongs to the peptidase C5 family. Interacts with protease cofactor pVI-C; this interaction is necessary for protease activation.

It localises to the virion. The protein resides in the host nucleus. It catalyses the reaction Cleaves proteins of the adenovirus and its host cell at two consensus sites: -Yaa-Xaa-Gly-Gly-|-Xaa- and -Yaa-Xaa-Gly-Xaa-|-Gly- (in which Yaa is Met, Ile or Leu, and Xaa is any amino acid).. With respect to regulation, requires DNA and protease cofactor for maximal activation. Inside nascent virions, becomes partially activated by binding to the viral DNA, allowing it to cleave the cofactor that binds to the protease and fully activates it. Actin, like the viral protease cofactor, seems to act as a cofactor in the cleavage of cytokeratin 18 and of actin itself. Its function is as follows. Cleaves viral precursor proteins (pTP, pIIIa, pVI, pVII, pVIII, and pX) inside newly assembled particles giving rise to mature virions. Protease complexed to its cofactor slides along the viral DNA to specifically locate and cleave the viral precursors. Mature virions have a weakened organization compared to the unmature virions, thereby facilitating subsequent uncoating. Without maturation, the particle lacks infectivity and is unable to uncoat. Late in adenovirus infection, in the cytoplasm, may participate in the cytoskeleton destruction. Cleaves host cell cytoskeletal keratins K7 and K18. The chain is Protease from Human adenovirus D serotype 9 (HAdV-9).